We begin with the raw amino-acid sequence, 190 residues long: MRLFGYARVSTSQQSLDIQIKGLKEAGVKASRIFTDKASGSSTDRKGLDLLRMKVEEGDVTLVKKLDRLGRDTADMIQLTKEFDAQGVAVRFIDDGISTDGEMGKMVVTILSAVAQAERRRILERTNEGRQEAKLKGIRFGRKRIIDRNSVLALHQQGTGATDIARRLSIARSTVYKILEDESRVNLSKI.

In terms of domain architecture, Resolvase/invertase-type recombinase catalytic spans 2–137 (RLFGYARVST…EGRQEAKLKG (136 aa)). The active-site O-(5'-phospho-DNA)-serine intermediate is the Ser-10. Residues 161-180 (ATDIARRLSIARSTVYKILE) constitute a DNA-binding region (H-T-H motif).

It belongs to the site-specific recombinase resolvase family.

Its function is as follows. Site-specific recombination protein. This chain is R46 site-specific recombinase (tnpR), found in Escherichia coli.